A 106-amino-acid chain; its full sequence is MSTAIAQQKIRIRLKAFDRRMLDLSCDKIIETADNTAATAIGPIPLPTKRKIYCVLCSPHVDKDSREHFETRTHRRIIDIYNPSAKTIDALMKLDLPSGVDIEVKL.

The protein belongs to the universal ribosomal protein uS10 family. As to quaternary structure, part of the 30S ribosomal subunit.

Involved in the binding of tRNA to the ribosomes. The polypeptide is Small ribosomal subunit protein uS10 (Prochlorococcus marinus (strain MIT 9303)).